The chain runs to 418 residues: 3-isopropylmalate dehydratase large subunit 1 (418 aa).

Residues Cys298, Cys358, and Cys361 each contribute to the [4Fe-4S] cluster site.

The protein belongs to the aconitase/IPM isomerase family. LeuC type 2 subfamily. Heterodimer of LeuC and LeuD. Requires [4Fe-4S] cluster as cofactor.

The enzyme catalyses (2R,3S)-3-isopropylmalate = (2S)-2-isopropylmalate. It functions in the pathway amino-acid biosynthesis; L-leucine biosynthesis; L-leucine from 3-methyl-2-oxobutanoate: step 2/4. Catalyzes the isomerization between 2-isopropylmalate and 3-isopropylmalate, via the formation of 2-isopropylmaleate. The sequence is that of 3-isopropylmalate dehydratase large subunit 1 from Archaeoglobus fulgidus (strain ATCC 49558 / DSM 4304 / JCM 9628 / NBRC 100126 / VC-16).